Here is a 253-residue protein sequence, read N- to C-terminus: Ribonuclease HII (253 aa).

The RNase H type-2 domain maps to 32-223 (APVAGLDEAG…FKTSGEEDRI (192 aa)). Residues Asp38, Glu39, and Asp130 each contribute to the a divalent metal cation site.

This sequence belongs to the RNase HII family. It depends on Mn(2+) as a cofactor. Mg(2+) is required as a cofactor.

It is found in the cytoplasm. It carries out the reaction Endonucleolytic cleavage to 5'-phosphomonoester.. Functionally, endonuclease that specifically degrades the RNA of RNA-DNA hybrids. This Chelativorans sp. (strain BNC1) protein is Ribonuclease HII.